Reading from the N-terminus, the 205-residue chain is dTTP/UTP pyrophosphatase (205 aa).

Aspartate 66 serves as the catalytic Proton acceptor.

The protein belongs to the Maf family. YhdE subfamily. A divalent metal cation is required as a cofactor.

It localises to the cytoplasm. The catalysed reaction is dTTP + H2O = dTMP + diphosphate + H(+). It carries out the reaction UTP + H2O = UMP + diphosphate + H(+). Functionally, nucleoside triphosphate pyrophosphatase that hydrolyzes dTTP and UTP. May have a dual role in cell division arrest and in preventing the incorporation of modified nucleotides into cellular nucleic acids. In Anaeromyxobacter sp. (strain Fw109-5), this protein is dTTP/UTP pyrophosphatase.